We begin with the raw amino-acid sequence, 230 residues long: Orotidine 5'-phosphate decarboxylase (230 aa).

Residues aspartate 10, lysine 31, 58–67, threonine 117, arginine 179, glutamine 188, glycine 208, and arginine 209 contribute to the substrate site; that span reads DLKLHDIPNT. Lysine 60 serves as the catalytic Proton donor.

This sequence belongs to the OMP decarboxylase family. Type 1 subfamily. In terms of assembly, homodimer.

The enzyme catalyses orotidine 5'-phosphate + H(+) = UMP + CO2. The protein operates within pyrimidine metabolism; UMP biosynthesis via de novo pathway; UMP from orotate: step 2/2. Functionally, catalyzes the decarboxylation of orotidine 5'-monophosphate (OMP) to uridine 5'-monophosphate (UMP). This Staphylococcus epidermidis (strain ATCC 35984 / DSM 28319 / BCRC 17069 / CCUG 31568 / BM 3577 / RP62A) protein is Orotidine 5'-phosphate decarboxylase.